The following is a 207-amino-acid chain: Ribosomal RNA small subunit methyltransferase G (207 aa).

S-adenosyl-L-methionine is bound by residues G71, F76, 122–123 (AE), and R135.

Belongs to the methyltransferase superfamily. RNA methyltransferase RsmG family.

Its subcellular location is the cytoplasm. In terms of biological role, specifically methylates the N7 position of a guanine in 16S rRNA. This Cytophaga hutchinsonii (strain ATCC 33406 / DSM 1761 / CIP 103989 / NBRC 15051 / NCIMB 9469 / D465) protein is Ribosomal RNA small subunit methyltransferase G.